We begin with the raw amino-acid sequence, 305 residues long: Acetaldehyde dehydrogenase (305 aa).

13–16 (SGNI) is an NAD(+) binding site. Cys128 acts as the Acyl-thioester intermediate in catalysis. Residues 159–167 (SAGPGTRQN) and Asn278 each bind NAD(+).

Belongs to the acetaldehyde dehydrogenase family.

It catalyses the reaction acetaldehyde + NAD(+) + CoA = acetyl-CoA + NADH + H(+). This is Acetaldehyde dehydrogenase from Roseiflexus sp. (strain RS-1).